The chain runs to 75 residues: Putative membrane protein insertion efficiency factor 2 (75 aa).

This sequence belongs to the UPF0161 family.

The protein resides in the cell membrane. Functionally, could be involved in insertion of integral membrane proteins into the membrane. The sequence is that of Putative membrane protein insertion efficiency factor 2 from Bacillus licheniformis (strain ATCC 14580 / DSM 13 / JCM 2505 / CCUG 7422 / NBRC 12200 / NCIMB 9375 / NCTC 10341 / NRRL NRS-1264 / Gibson 46).